The following is a 382-amino-acid chain: SPRY domain-containing protein C285.10c (382 aa).

The helical transmembrane segment at 21–41 threads the bilayer; it reads LAILFIFIALAAVIVLLICLL. The region spanning 79 to 284 is the B30.2/SPRY domain; it reads GFSLLDDMGK…LHVNLGQAGY (206 aa). The tract at residues 304 to 382 is disordered; that stretch reads APPPSYSTSQ…MHSMPATDEV (79 aa). Polar residues-rich tracts occupy residues 309–334 and 361–372; these read YSTSQPTISWDAASESSAGTTTQGDT and FSPSSSNNQAYQ.

It localises to the cytoplasm. The protein resides in the membrane. The sequence is that of SPRY domain-containing protein C285.10c from Schizosaccharomyces pombe (strain 972 / ATCC 24843) (Fission yeast).